The primary structure comprises 2126 residues: Phthioceranic/hydroxyphthioceranic acid synthase (2126 aa).

In terms of domain architecture, Ketosynthase family 3 (KS3) spans 24-447 (VTPVAVIGMA…GTNVHAVVEQ (424 aa)). The Acyl-thioester intermediate; for beta-ketoacyl synthase activity role is filled by Cys196. Catalysis depends on for beta-ketoacyl synthase activity residues His331 and His367. The tract at residues 449 to 549 (PQTEAQPHAA…VYQPAVGQDD (101 aa)) is linker domain (LD). The acyltransferase (AT) stretch occupies residues 550 to 849 (RGPVWLFSGQ…VAALAGMRRE (300 aa)). Ser641 (acyl-ester intermediate; for acyltransferase activity) is an active-site residue. Residues 909–1191 (STVAVHPLLG…LAVCGLRIGT (283 aa)) form a dehydratase (DH) region. An N-terminal hotdog fold region spans residues 914 to 1032 (HPLLGAHVRL…RRASAVLQQV (119 aa)). A PKS/mFAS DH domain is found at 914 to 1198 (HPLLGAHVRL…IGTGVSERDK (285 aa)). Residue His947 is the Proton acceptor; for dehydratase activity of the active site. A C-terminal hotdog fold region spans residues 1051–1198 (PCRVDGEDLR…IGTGVSERDK (148 aa)). Residue Asp1115 is the Proton donor; for dehydratase activity of the active site. Positions 1227–1398 (KWLLISDCAA…SEEDETAWRD (172 aa)) are pseudo beta-ketoacyl reductase (PsiKR). An enoylreductase (ER) region spans residues 1426 to 1750 (SGMRLQIRTP…EHTGKLVLHI (325 aa)). The segment at 1772 to 2019 (GSYIITGGLG…AERSRFFEVF (248 aa)) is beta-ketoacyl reductase (KR). NADP(+) is bound by residues 1780–1783 (LGGL), 1803–1806 (SRTQ), 1831–1832 (DI), and 1904–1905 (FS). A Carrier domain is found at 2040–2126 (DEWPARLRQL…DAPAAALSSQ (87 aa)). Ser2075 bears the O-(pantetheine 4'-phosphoryl)serine mark.

Pantetheine 4'-phosphate serves as cofactor.

It catalyses the reaction hexadecanoyl-[(hydroxy)phthioceranic acid synthase] + 7 (S)-methylmalonyl-CoA + 14 NADPH + 21 H(+) = C37-phthioceranyl-[(hydroxy)phthioceranic acid synthase] + 7 CO2 + 14 NADP(+) + 7 CoA + 7 H2O. The catalysed reaction is hexadecanoyl-[(hydroxy)phthioceranic acid synthase] + 8 (S)-methylmalonyl-CoA + 16 NADPH + 24 H(+) = C40-phthioceranyl-[(hydroxy)phthioceranic acid synthase] + 8 CO2 + 16 NADP(+) + 8 CoA + 8 H2O. It participates in lipid metabolism; fatty acid biosynthesis. Its pathway is glycolipid metabolism; sulfolipid-1 biosynthesis. In terms of biological role, involved in sulfolipid-1 biosynthesis. Catalyzes the synthesis of the hepta- and octamethyl phthioceranic and hydroxyphthioceranic acids, the methyl-branched acyl constituents of sulfolipids. This is Phthioceranic/hydroxyphthioceranic acid synthase (pks2) from Mycobacterium bovis (strain ATCC BAA-935 / AF2122/97).